We begin with the raw amino-acid sequence, 78 residues long: Mandibular organ-inhibiting hormone 2 (78 aa).

Cystine bridges form between Cys7–Cys44, Cys24–Cys40, and Cys27–Cys53.

The protein belongs to the arthropod CHH/MIH/GIH/VIH hormone family. Produced by the medulla terminalis X-organ in the eyestalks and transported to the sinus gland where it is stored and released.

The protein localises to the secreted. Functionally, represses the synthesis of methyl farnesoate, the precursor of insect juvenile hormone III in the mandibular organ. This Cancer pagurus (Rock crab) protein is Mandibular organ-inhibiting hormone 2.